A 213-amino-acid chain; its full sequence is Large ribosomal subunit protein uL3 (213 aa).

This sequence belongs to the universal ribosomal protein uL3 family. Part of the 50S ribosomal subunit. Forms a cluster with proteins L14 and L19.

One of the primary rRNA binding proteins, it binds directly near the 3'-end of the 23S rRNA, where it nucleates assembly of the 50S subunit. This Desulforudis audaxviator (strain MP104C) protein is Large ribosomal subunit protein uL3.